Consider the following 379-residue polypeptide: Cytochrome b (379 aa).

A run of 4 helical transmembrane segments spans residues 32–52, 76–98, 111–131, and 177–197; these read YGSL…VLAT, WLLR…LHIG, VWNI…LGYV, and FFAL…LHIF. Residues histidine 82 and histidine 96 each coordinate heme b. Histidine 181 and histidine 195 together coordinate heme b. Histidine 200 serves as a coordination point for a ubiquinone. The next 4 helical transmembrane spans lie at 223–243, 287–304, 320–340, and 348–367; these read YSVK…VFTL, LGGV…FLFS, LARL…WLGS, and NEVA…TMCA.

The protein belongs to the cytochrome b family. In terms of assembly, the main subunits of complex b-c1 are: cytochrome b, cytochrome c1 and the Rieske protein. Heme b is required as a cofactor.

Its subcellular location is the mitochondrion inner membrane. Functionally, component of the ubiquinol-cytochrome c reductase complex (complex III or cytochrome b-c1 complex) that is part of the mitochondrial respiratory chain. The b-c1 complex mediates electron transfer from ubiquinol to cytochrome c. Contributes to the generation of a proton gradient across the mitochondrial membrane that is then used for ATP synthesis. The protein is Cytochrome b (mt:Cyt-b) of Brachionus plicatilis (Marine rotifer).